The primary structure comprises 665 residues: DNA ligase (665 aa).

NAD(+) contacts are provided by residues 32 to 36 (DSEYD), 81 to 82 (SL), and Glu-110. Lys-112 functions as the N6-AMP-lysine intermediate in the catalytic mechanism. NAD(+) contacts are provided by Arg-133, Glu-167, Lys-283, and Lys-307. 4 residues coordinate Zn(2+): Cys-401, Cys-404, Cys-419, and Cys-424. In terms of domain architecture, BRCT spans 586–665 (EGHPDFSGKT…AAFIEKQNGI (80 aa)).

Belongs to the NAD-dependent DNA ligase family. LigA subfamily. It depends on Mg(2+) as a cofactor. Mn(2+) is required as a cofactor.

It catalyses the reaction NAD(+) + (deoxyribonucleotide)n-3'-hydroxyl + 5'-phospho-(deoxyribonucleotide)m = (deoxyribonucleotide)n+m + AMP + beta-nicotinamide D-nucleotide.. DNA ligase that catalyzes the formation of phosphodiester linkages between 5'-phosphoryl and 3'-hydroxyl groups in double-stranded DNA using NAD as a coenzyme and as the energy source for the reaction. It is essential for DNA replication and repair of damaged DNA. The chain is DNA ligase from Staphylococcus epidermidis (strain ATCC 12228 / FDA PCI 1200).